The following is a 466-amino-acid chain: tRNA-2-methylthio-N(6)-dimethylallyladenosine synthase (466 aa).

In terms of domain architecture, MTTase N-terminal spans 21–137 (GSYWITTFGC…LEDLLNQVDN (117 aa)). The [4Fe-4S] cluster site is built by Cys-30, Cys-66, Cys-100, Cys-172, Cys-176, and Cys-179. Residues 158 to 395 (RDSNICAWVN…NLLVEQTAKD (238 aa)) form the Radical SAM core domain. Residues 398 to 466 (TRYHNQIVEV…AFSLTGSPIQ (69 aa)) enclose the TRAM domain.

This sequence belongs to the methylthiotransferase family. MiaB subfamily. Monomer. Requires [4Fe-4S] cluster as cofactor.

It is found in the cytoplasm. It catalyses the reaction N(6)-dimethylallyladenosine(37) in tRNA + (sulfur carrier)-SH + AH2 + 2 S-adenosyl-L-methionine = 2-methylsulfanyl-N(6)-dimethylallyladenosine(37) in tRNA + (sulfur carrier)-H + 5'-deoxyadenosine + L-methionine + A + S-adenosyl-L-homocysteine + 2 H(+). Catalyzes the methylthiolation of N6-(dimethylallyl)adenosine (i(6)A), leading to the formation of 2-methylthio-N6-(dimethylallyl)adenosine (ms(2)i(6)A) at position 37 in tRNAs that read codons beginning with uridine. This is tRNA-2-methylthio-N(6)-dimethylallyladenosine synthase from Prochlorococcus marinus (strain SARG / CCMP1375 / SS120).